Consider the following 256-residue polypeptide: Cell division protein DivIB (256 aa).

Topologically, residues 1-30 (MNNSKVIKLQDRVPKLKNQKKKNKKNVNHR) are cytoplasmic. The helical transmembrane segment at 31–51 (LILYISILFLLVLFLIYFRSP) threads the bilayer. Residues 52–256 (LSNIKKISVF…KELGAEEKKE (205 aa)) are Extracellular-facing. The POTRA domain occupies 53 to 121 (SNIKKISVFG…NNIDIHIEEY (69 aa)).

It belongs to the FtsQ/DivIB family. DivIB subfamily.

It localises to the cell membrane. Functionally, cell division protein that may be involved in stabilizing or promoting the assembly of the division complex. The chain is Cell division protein DivIB from Bacillus cereus (strain ATCC 14579 / DSM 31 / CCUG 7414 / JCM 2152 / NBRC 15305 / NCIMB 9373 / NCTC 2599 / NRRL B-3711).